The primary structure comprises 98 residues: Integration host factor subunit beta (98 aa).

The interval 59 to 98 is disordered; the sequence is RTGRNPKTGESVTLPGKYVPHFKPGKEMRDRVNESIQSEG. The span at 82–91 shows a compositional bias: basic and acidic residues; that stretch reads PGKEMRDRVN.

It belongs to the bacterial histone-like protein family. As to quaternary structure, heterodimer of an alpha and a beta chain.

Functionally, this protein is one of the two subunits of integration host factor, a specific DNA-binding protein that functions in genetic recombination as well as in transcriptional and translational control. In Saccharophagus degradans (strain 2-40 / ATCC 43961 / DSM 17024), this protein is Integration host factor subunit beta.